Here is a 310-residue protein sequence, read N- to C-terminus: Vomeronasal type-1 receptor 93 (310 aa).

Residues methionine 1–glutamate 20 are Extracellular-facing. A helical transmembrane segment spans residues valine 21–glycine 41. Topologically, residues glutamate 42–glutamine 59 are cytoplasmic. Residues leucine 60 to tryptophan 80 form a helical membrane-spanning segment. The Extracellular segment spans residues aspartate 81–arginine 93. An intrachain disulfide couples cysteine 85 to cysteine 172. The chain crosses the membrane as a helical span at residues leucine 94–leucine 114. Residues serine 115 to glycine 134 are Cytoplasmic-facing. The chain crosses the membrane as a helical span at residues alanine 135–isoleucine 155. Over alanine 156 to glutamate 193 the chain is Extracellular. Residue asparagine 159 is glycosylated (N-linked (GlcNAc...) asparagine). The helical transmembrane segment at alanine 194–histidine 214 threads the bilayer. Residues arginine 215–glutamate 238 are Cytoplasmic-facing. Residues threonine 239 to tyrosine 259 form a helical membrane-spanning segment. Residues serine 260–threonine 269 lie on the Extracellular side of the membrane. A helical membrane pass occupies residues phenylalanine 270–isoleucine 290. Residues phenylalanine 291–isoleucine 310 are Cytoplasmic-facing.

Belongs to the G-protein coupled receptor 1 family. In terms of tissue distribution, expressed in 1-4% of neurons of the vomeronasal organ. Only one pheromone receptor gene may be expressed in a particular neuron. Not expressed in the main olfactory epithelium.

It is found in the cell membrane. Putative pheromone receptor implicated in the regulation of social as well as reproductive behavior. This is Vomeronasal type-1 receptor 93 (Vom1r93) from Rattus norvegicus (Rat).